A 522-amino-acid chain; its full sequence is Solute carrier family 2, facilitated glucose transporter member 2 (522 aa).

The Cytoplasmic portion of the chain corresponds to 1–10; that stretch reads MSEDKITGTL. A helical membrane pass occupies residues 11–31; sequence AFTVFTAVLGSFQFGYDIGVI. Residues 32 to 96 lie on the Extracellular side of the membrane; the sequence is NAPQEVIISH…SAHIVTMLWS (65 aa). The N-linked (GlcNAc...) asparagine glycan is linked to N62. The helical transmembrane segment at 97-117 threads the bilayer; that stretch reads LSVSSFAVGGMVASFFGGWLG. Residues 118-125 are Cytoplasmic-facing; it reads DKLGRIKA. A helical membrane pass occupies residues 126-146; the sequence is MLAANSLSLTGALLMGCSKFG. At 147-156 the chain is on the extracellular side; sequence PAHALIIAGR. A helical transmembrane segment spans residues 157-177; that stretch reads SVSGLYCGLISGLVPMYIGEI. Topologically, residues 178 to 185 are cytoplasmic; it reads APTTLRGA. Residues 186 to 206 traverse the membrane as a helical segment; the sequence is LGTLHQLALVTGILISQIAGL. Q191 lines the D-glucose pocket. Residues 207-215 lie on the Extracellular side of the membrane; that stretch reads SFILGNQDY. The helical transmembrane segment at 216 to 236 threads the bilayer; sequence WHILLGLSAVPALLQCLLLLF. Over 237-301 the chain is Cytoplasmic; that stretch reads CPESPRYLYL…LFTDPNYRQP (65 aa). The helical transmembrane segment at 302–322 threads the bilayer; it reads IVVALMLHLAQQFSGINGIFY. D-glucose-binding positions include 312 to 313 and N318; that span reads QQ. The Extracellular portion of the chain corresponds to 323 to 337; it reads YSTSIFQTAGISQPV. Residues 338–358 traverse the membrane as a helical segment; that stretch reads YATIGVGAINMIFTAVSVLLV. N347 is a D-glucose binding site. Residues 359–365 are Cytoplasmic-facing; sequence EKAGRRT. Residues 366–386 traverse the membrane as a helical segment; sequence LFLAGMIGMFFCAVFMSLGLV. The Extracellular segment spans residues 387 to 401; it reads LLDKFTWMSYVSMTA. The chain crosses the membrane as a helical span at residues 402 to 422; the sequence is IFLFVSFFEIGPGPIPWFMVA. D-glucose contacts are provided by E410 and W418. The Cytoplasmic portion of the chain corresponds to 423–431; sequence EFFSQGPRP. The chain crosses the membrane as a helical span at residues 432–452; it reads TALALAAFSNWVCNFIIALCF. Over 453–459 the chain is Extracellular; that stretch reads QYIADFL. A helical transmembrane segment spans residues 460-480; sequence GPYVFFLFAGVVLVFTLFTFF. Residues 481-522 lie on the Cytoplasmic side of the membrane; it reads KVPETKGKSFDEIAAEFRKKSGSAPPRKATVQMEFLGSSETV. T521 bears the Phosphothreonine mark.

It belongs to the major facilitator superfamily. Sugar transporter (TC 2.A.1.1) family. Glucose transporter subfamily. In terms of processing, N-glycosylated; required for stability and retention at the cell surface of pancreatic beta cells. As to expression, present in liver, intestine, kidney and beta-pancreatic islet cells.

It is found in the cell membrane. The enzyme catalyses D-glucose(out) = D-glucose(in). It carries out the reaction D-fructose(out) = D-fructose(in). The catalysed reaction is L-dehydroascorbate(out) = L-dehydroascorbate(in). It catalyses the reaction D-galactose(in) = D-galactose(out). With respect to regulation, D-glucose and maltose competitively inhibit fructose transport. D-glucose, D-fructose and maltose inhibit deoxyglucose transport. In terms of biological role, facilitative hexose transporter that mediates the transport of glucose, fructose and galactose. Likely mediates the bidirectional transfer of glucose across the plasma membrane of hepatocytes and is responsible for uptake of glucose by the beta cells; may comprise part of the glucose-sensing mechanism of the beta cell. May also participate with the Na(+)/glucose cotransporter in the transcellular transport of glucose in the small intestine and kidney. Also able to mediate the transport of dehydroascorbate. This chain is Solute carrier family 2, facilitated glucose transporter member 2, found in Rattus norvegicus (Rat).